Consider the following 737-residue polypeptide: 1,4-alpha-glucan branching enzyme GlgB (737 aa).

D399 serves as the catalytic Nucleophile. The active-site Proton donor is E452.

This sequence belongs to the glycosyl hydrolase 13 family. GlgB subfamily. As to quaternary structure, monomer.

It carries out the reaction Transfers a segment of a (1-&gt;4)-alpha-D-glucan chain to a primary hydroxy group in a similar glucan chain.. Its pathway is glycan biosynthesis; glycogen biosynthesis. In terms of biological role, catalyzes the formation of the alpha-1,6-glucosidic linkages in glycogen by scission of a 1,4-alpha-linked oligosaccharide from growing alpha-1,4-glucan chains and the subsequent attachment of the oligosaccharide to the alpha-1,6 position. The polypeptide is 1,4-alpha-glucan branching enzyme GlgB (Chlamydia muridarum (strain MoPn / Nigg)).